The following is a 304-amino-acid chain: GTP cyclohydrolase FolE2 (304 aa).

This sequence belongs to the GTP cyclohydrolase IV family.

It carries out the reaction GTP + H2O = 7,8-dihydroneopterin 3'-triphosphate + formate + H(+). Its pathway is cofactor biosynthesis; 7,8-dihydroneopterin triphosphate biosynthesis; 7,8-dihydroneopterin triphosphate from GTP: step 1/1. In terms of biological role, converts GTP to 7,8-dihydroneopterin triphosphate. This chain is GTP cyclohydrolase FolE2, found in Hahella chejuensis (strain KCTC 2396).